The primary structure comprises 616 residues: Dihydroxy-acid dehydratase (616 aa).

Aspartate 81 is a Mg(2+) binding site. Cysteine 122 is a binding site for [2Fe-2S] cluster. Residues aspartate 123 and lysine 124 each contribute to the Mg(2+) site. An N6-carboxylysine modification is found at lysine 124. Cysteine 195 lines the [2Fe-2S] cluster pocket. Glutamate 491 is a binding site for Mg(2+). Residue serine 517 is the Proton acceptor of the active site.

The protein belongs to the IlvD/Edd family. In terms of assembly, homodimer. The cofactor is [2Fe-2S] cluster. Mg(2+) is required as a cofactor.

It carries out the reaction (2R)-2,3-dihydroxy-3-methylbutanoate = 3-methyl-2-oxobutanoate + H2O. The enzyme catalyses (2R,3R)-2,3-dihydroxy-3-methylpentanoate = (S)-3-methyl-2-oxopentanoate + H2O. It participates in amino-acid biosynthesis; L-isoleucine biosynthesis; L-isoleucine from 2-oxobutanoate: step 3/4. Its pathway is amino-acid biosynthesis; L-valine biosynthesis; L-valine from pyruvate: step 3/4. In terms of biological role, functions in the biosynthesis of branched-chain amino acids. Catalyzes the dehydration of (2R,3R)-2,3-dihydroxy-3-methylpentanoate (2,3-dihydroxy-3-methylvalerate) into 2-oxo-3-methylpentanoate (2-oxo-3-methylvalerate) and of (2R)-2,3-dihydroxy-3-methylbutanoate (2,3-dihydroxyisovalerate) into 2-oxo-3-methylbutanoate (2-oxoisovalerate), the penultimate precursor to L-isoleucine and L-valine, respectively. The protein is Dihydroxy-acid dehydratase of Escherichia coli O9:H4 (strain HS).